Here is a 477-residue protein sequence, read N- to C-terminus: Adenosylhomocysteinase (477 aa).

Residues Thr63, Asp142, and Glu202 each coordinate substrate. 203-205 (TTT) lines the NAD(+) pocket. Substrate-binding residues include Lys232 and Asp236. NAD(+) is bound by residues Asn237, 266–271 (GYGDVG), Glu289, Asn324, 345–347 (IGH), and Asn390.

Belongs to the adenosylhomocysteinase family. Requires NAD(+) as cofactor.

The protein localises to the cytoplasm. It catalyses the reaction S-adenosyl-L-homocysteine + H2O = L-homocysteine + adenosine. It functions in the pathway amino-acid biosynthesis; L-homocysteine biosynthesis; L-homocysteine from S-adenosyl-L-homocysteine: step 1/1. Its function is as follows. May play a key role in the regulation of the intracellular concentration of adenosylhomocysteine. The sequence is that of Adenosylhomocysteinase from Methylibium petroleiphilum (strain ATCC BAA-1232 / LMG 22953 / PM1).